The primary structure comprises 494 residues: Neuronal pentraxin receptor (494 aa).

The Cytoplasmic portion of the chain corresponds to 1 to 2 (MK). The helical; Signal-anchor for type II membrane protein transmembrane segment at 3-23 (FLAVLLAAGMLAFLGAVICII) threads the bilayer. The Extracellular segment spans residues 24-494 (ASVPLAASPA…FDVCKRRAKA (471 aa)). Positions 37 to 80 (PGGTDNASAASAAGAPGPQRSLSALQGAGGSAGPSVLPGEPAAS) are disordered. Asn-42 carries an N-linked (GlcNAc...) asparagine glycan. Composition is skewed to low complexity over residues 43-62 (ASAA…SALQ) and 69-80 (GPSVLPGEPAAS). N-linked (GlcNAc...) asparagine glycosylation is present at Asn-211. Positions 286 to 488 (DAFKVSIPIR…GAKKAAFDVC (203 aa)) constitute a Pentraxin (PTX) domain. Cys-316 and Cys-377 are oxidised to a cystine. Residues Asn-341, Glu-419, Gln-420, Asp-421, and Gln-431 each coordinate Ca(2+). N-linked (GlcNAc...) asparagine glycosylation is present at Asn-457.

Interacts with KLHL2. Heteropentamer with NPTX1 and/or NPTX2. Also binds taipoxin-associated calcium-binding protein 49 (TCBP49/RCN2). Requires Ca(2+) as cofactor. Post-translationally, N-glycosylated. In terms of processing, ubiquitinated by a cullin-RING-based BCR (BTB-CUL3-RBX1) E3 ubiquitin-protein ligase complex containing KLHL2. As to expression, brain specific.

It localises to the membrane. May be involved in mediating uptake of synaptic material during synapse remodeling or in mediating the synaptic clustering of AMPA glutamate receptors at a subset of excitatory synapses. The sequence is that of Neuronal pentraxin receptor (Nptxr) from Rattus norvegicus (Rat).